Consider the following 1203-residue polypeptide: MTKKSQENISLPQGVLYCWGDKFSGKPTFNPLIPNICFMDNGYNHSLALTETGELYGWGDNRHHQLSSNKAITSIDKPIKIQVIPNQRVKSISCGGNFSAAIMENGLLYVWGTLIEGGKCTESPTKVDLLKGVTCVSIGINHCAVVADSPTTPEKRSVYTWGTNRKGQLGVVGDSITNAPRRVTLGSKAISVCCGEEFTAAIVEGNEVFVWGYNKSRQICSNNSDEIISIPVKPFLGRDIVELSCTKNYIAARSGVGNVCVWGSNEQVCRIGDDKFINFPNKIKQISASTSHILVLSEKGEIFSWGNSEDNQLSHKLDVNSSPNINSSSGTTTPTTNTTTTTKKSTLQFNNVYQLEGRNVLSVYSWGKSSGAIIEPGNFRVDIAESMRRKDNIGSPAPLFFRKLVNYLRGENSKAEGLFRLSGSMARCDDLEKRLDSNEIFPINKYEPYDAADIIKRYLKTLPEPLLTTQLCQKYEKDILNFHNNNINSNSNSSNPNNNNNNNNNNDKIENLILEWIEKLPLENRQLLIYLLSFLQEISYSQIKYQKQNAMGEKNLAIVFAPNILTRGEIGNDEIVEDMIRLLPTIMKQYPLMEDLIIIDQAQQCLRGSRIPYIIDHWIRVTKERETANNSLFKPEIIKTIINSIVECTLEIKNNQNNQNNQKENNNNNNNINNSNNNNTNNTNISPTTLSPSTLSSSQQQQSTPSSLTSSPSPSQRNSLSTGNIANSLSLSSNALFSPNFLSSSKDGNNINNNNNNNNNNNNNNNNNNSSNSSSSSGSSLSSSPNLSPTIVNRSGYSLSFSGGTPSSRDSSVNNLLNTSGGAIQSIQRQFANSGSSSNNNNSNNSPSLIGSNSSPALTFSNSSGNLIETTKLYEKVLALILSPVLPIGSIMKVLPSIFELDTNNDLFIRLLTTIKLVRTVRSNLDEFIQQQLVMIKEINQCSQFIDKAKQLNENVESVITDLLYVDESIKYWKQVQPLIQLYSQQIQSYFKWWFDLLEKSMTETEEKLFRAKKEFDKLETEKTKLEKQLNHLNSVTLETTDEQILLKKQFDQWCLINQIENCSRKIEISNQNLSRVNHDYCSIQSHFEAFKPHLLIVQEFVSIILKSVSLYIEKLDQIKSNTLQMFPQYFNAYIELIFTHHHEIKQQQQLSIIKSLAHSITLQHQLLFIENVNQSKYQISLELETKFNSLKRVILENLKDSR.

RCC1 repeat units follow at residues 52–104, 106–148, 155–204, 206–255, 257–298, 299–359, and 361–410; these read TGEL…AIME, GLLY…VVAD, KRSV…AIVE, NEVF…ARSG, GNVC…VLSE, KGEI…EGRN, and LSVY…YLRG. The tract at residues 316–343 is disordered; it reads KLDVNSSPNINSSSGTTTPTTNTTTTTK. Low complexity predominate over residues 320–343; that stretch reads NSSPNINSSSGTTTPTTNTTTTTK. The Rho-GAP domain maps to 381-594; sequence VDIAESMRRK…TIMKQYPLME (214 aa). Residues 649 to 679 adopt a coiled-coil conformation; that stretch reads TLEIKNNQNNQNNQKENNNNNNNINNSNNNN. Disordered regions lie at residues 657 to 725, 746 to 789, and 831 to 852; these read NNQN…TGNI, KDGN…NLSP, and FANSGSSSNNNNSNNSPSLIGS. Composition is skewed to low complexity over residues 746-788 and 833-852; these read KDGN…PNLS and NSGSSSNNNNSNNSPSLIGS. Positions 995–1078 form a coiled coil; it reads FDLLEKSMTE…ISNQNLSRVN (84 aa).

It is found in the cytoplasm. Functionally, rho GTPase-activating protein involved in the signal transduction pathway. The polypeptide is Rho GTPase-activating protein gacGG (gacGG) (Dictyostelium discoideum (Social amoeba)).